The primary structure comprises 281 residues: Ribosomal RNA small subunit methyltransferase J (281 aa).

S-adenosyl-L-methionine contacts are provided by residues 129–130 (RD), 145–146 (ER), and D199.

The protein belongs to the methyltransferase superfamily. RsmJ family.

It is found in the cytoplasm. It carries out the reaction guanosine(1516) in 16S rRNA + S-adenosyl-L-methionine = N(2)-methylguanosine(1516) in 16S rRNA + S-adenosyl-L-homocysteine + H(+). In terms of biological role, specifically methylates the guanosine in position 1516 of 16S rRNA. This is Ribosomal RNA small subunit methyltransferase J from Laribacter hongkongensis (strain HLHK9).